A 115-amino-acid polypeptide reads, in one-letter code: Large ribosomal subunit protein uL18 (115 aa).

This sequence belongs to the universal ribosomal protein uL18 family. As to quaternary structure, part of the 50S ribosomal subunit; part of the 5S rRNA/L5/L18/L25 subcomplex. Contacts the 5S and 23S rRNAs.

In terms of biological role, this is one of the proteins that bind and probably mediate the attachment of the 5S RNA into the large ribosomal subunit, where it forms part of the central protuberance. The sequence is that of Large ribosomal subunit protein uL18 from Rickettsia rickettsii (strain Iowa).